A 481-amino-acid polypeptide reads, in one-letter code: MFRLHSLSALAELAVGSRCYHGGSQPTQMKRRLMMVAFLGASAVTASTGLLWKRALAESPPSVNNPKSELGDKGKNKDEGEVCNHEKKAADVCLEPHPEEKKKKRSGFRDRKVMEYENRIRAYSTPDKIFRYFATLKVINEPGESEVFMTPQDFVRSITPNEKQPEHLGLDQYTIKRFDGKKIAQEREKFADEGSIFYTLGECGLISFSDYIFLTTVLSTPQRNFEIAFKMFDLNGDGEVDMEEFEQASCPGNIIRSQTSMGMRHRDRPTTGNTLKSGLCSALTTYFFGADLKGKLTIKNFLEFQRKLQHDVLKLEFERHDPVDGKITERQFGGMLLAYSGVQSKKLTAMQKQLKKHFKEGKGLTFQEVENFFTFLKNINDVDTALSFYHMAGASLDKVTMQQVARTVAKVELSDHVCDVVFALFDCDGNGELSNKEFVSIMKQRLMRGLEKPKDMGFTRLMQAMWKCAQETAWDFALPKQ.

The transit peptide at 1–33 directs the protein to the mitochondrion; sequence MFRLHSLSALAELAVGSRCYHGGSQPTQMKRRL. Positions 58-82 are disordered; it reads ESPPSVNNPKSELGDKGKNKDEGEV. A compositionally biased stretch (basic and acidic residues) spans 69 to 82; that stretch reads ELGDKGKNKDEGEV. Residues 101–112 form a polybasic region region; it reads KKKKRSGFRDRK. At Ser-124 the chain carries Phosphoserine. The segment at 128-131 is k/R-ring; that stretch reads KIFR. The EF-hand 1 domain maps to 220–255; the sequence is TPQRNFEIAFKMFDLNGDGEVDMEEFEQASCPGNII. The Ca(2+) site is built by Asp-233, Asn-235, Asp-237, Glu-239, and Glu-244. Residues 264 to 268 form a k/R-ring region; that stretch reads RHRDR. The region spanning 413-448 is the EF-hand 2 domain; that stretch reads LSDHVCDVVFALFDCDGNGELSNKEFVSIMKQRLMR. 5 residues coordinate Ca(2+): Asp-426, Asp-428, Asn-430, Glu-432, and Glu-437. Arg-460 bears the Asymmetric dimethylarginine mark. A C-helix region region spans residues 460 to 470; that stretch reads RLMQAMWKCAQ.

This sequence belongs to the MICU1 family. MICU1 subfamily. Heterodimer; disulfide-linked; heterodimerizes with MICU2 or MICU3. Homodimer; disulfide-linked. Component of the uniplex complex, composed of MCU, EMRE/SMDT1, MICU1 and MICU2 (or MICU3) in a 4:4:1:1 stoichiometry. The composition of calcium sensors within the uniplex complex can differ depending on tissues: a MICU1 homodimer can be present instead of the MICU1-MICU2 heterodimer in skeletal-muscle and kidney. MICU1 is recruited to the uniplex complex by EMRE/SMDT1, and it associates with MCU at low calcium levels, occluding the pore of the MCU channel. Associates with the MICOS complex. Interacts with SLC25A23. Interacts with CHCHD4/MIA40; which introduces the interchain disulfide bond with MICU2. Interacts (when methylated) with UCP2; leading to decrease the calcium sensitivity of MICU1. Phosphorylation at Ser-124 by AKT1 impairs its maturation and stability. Post-translationally, asymmetric dimethylation at Arg-460 by PRMT1 decreases the calcium sensitivity of MICU1 by promoting interaction with UCP2. In terms of processing, degraded by YME1L1 when not complexed as homodimer or heterodimer. Not degraded when complexed as homodimer or heterodimer; the presence of the interchain disulfide bond protecting MICU1 from degradation by YME1L1.

Its subcellular location is the mitochondrion intermembrane space. The protein resides in the mitochondrion inner membrane. In terms of biological role, calcium sensor of the mitochondrial calcium uniporter (MCU) channel, which senses calcium level via its EF-hand domains. MICU1 and MICU2 (or MICU3) form a disulfide-linked heterodimer that stimulates and inhibits MCU activity, depending on the concentration of calcium. At low calcium levels, MICU1 occludes the pore of the MCU channel, preventing mitochondrial calcium uptake. At higher calcium levels, calcium-binding to MICU1 and MICU2 (or MICU3) induces a conformational change that weakens MCU-MICU1 interactions and moves the MICU1-MICU2 heterodimer away from the pore, allowing calcium permeation through the MCU channel. Also required to protect against manganese toxicity by preventing manganese uptake by MCU: mechanistically, manganese-binding to its EF-hand domains does not induce any conformational change, maintaining MCU pore occlusion. Acts as a regulator of mitochondrial cristae structure independently of its ability to regulate the mitochondrial calcium uniporter channel. Regulates glucose-dependent insulin secretion in pancreatic beta-cells by regulating mitochondrial calcium uptake. Induces T-helper 1-mediated autoreactivity, which is accompanied by the release of IFNG. The protein is Calcium uptake protein 1, mitochondrial (MICU1) of Ailuropoda melanoleuca (Giant panda).